A 538-amino-acid chain; its full sequence is CTP synthase (538 aa).

The segment at 1 to 266 (MKTKFIFVTG…DDQVVDKLNI (266 aa)) is amidoligase domain. Position 14 (S14) interacts with CTP. Residue S14 participates in UTP binding. Residues 15-20 (SIGKGL) and D72 contribute to the ATP site. D72 and E140 together coordinate Mg(2+). CTP-binding positions include 147-149 (DIE), 187-192 (KTKPTQ), and K223. UTP is bound by residues 187–192 (KTKPTQ) and K223. Residues 292–534 (HIAIVGKYVN…IAAALEHRGK (243 aa)) enclose the Glutamine amidotransferase type-1 domain. G354 is an L-glutamine binding site. The Nucleophile; for glutamine hydrolysis role is filled by C381. L-glutamine contacts are provided by residues 382–385 (LGMQ), E405, and R462. Residues H507 and E509 contribute to the active site.

Belongs to the CTP synthase family. Homotetramer.

It carries out the reaction UTP + L-glutamine + ATP + H2O = CTP + L-glutamate + ADP + phosphate + 2 H(+). It catalyses the reaction L-glutamine + H2O = L-glutamate + NH4(+). The catalysed reaction is UTP + NH4(+) + ATP = CTP + ADP + phosphate + 2 H(+). It participates in pyrimidine metabolism; CTP biosynthesis via de novo pathway; CTP from UDP: step 2/2. Allosterically activated by GTP, when glutamine is the substrate; GTP has no effect on the reaction when ammonia is the substrate. The allosteric effector GTP functions by stabilizing the protein conformation that binds the tetrahedral intermediate(s) formed during glutamine hydrolysis. Inhibited by the product CTP, via allosteric rather than competitive inhibition. Catalyzes the ATP-dependent amination of UTP to CTP with either L-glutamine or ammonia as the source of nitrogen. Regulates intracellular CTP levels through interactions with the four ribonucleotide triphosphates. This chain is CTP synthase, found in Geobacter metallireducens (strain ATCC 53774 / DSM 7210 / GS-15).